A 225-amino-acid chain; its full sequence is UPF0758 protein Sama_0327 (225 aa).

The 123-residue stretch at 102-224 (VLTSPDLTRD…IVSFAERGWI (123 aa)) folds into the MPN domain. Residues histidine 173, histidine 175, and aspartate 186 each coordinate Zn(2+). A JAMM motif motif is present at residues 173-186 (HNHPSGVAEPSQAD).

It belongs to the UPF0758 family.

In Shewanella amazonensis (strain ATCC BAA-1098 / SB2B), this protein is UPF0758 protein Sama_0327.